A 98-amino-acid chain; its full sequence is Large ribosomal subunit protein eL21 (98 aa).

It belongs to the eukaryotic ribosomal protein eL21 family.

The protein is Large ribosomal subunit protein eL21 of Methanocorpusculum labreanum (strain ATCC 43576 / DSM 4855 / Z).